The primary structure comprises 839 residues: Autophagy-related protein 9A (839 aa).

Positions 1–21 (MAQFDTEYQRLEASYSDSPPG) are disordered. Position 2 is an N-acetylalanine (Ala-2). The Cytoplasmic portion of the chain corresponds to 2-61 (AQFDTEYQRLEASYSDSPPGEEDLLVHVPEGSKSPWHHIENLDLFFSRVYNLHQKNGFTC). The Tyrosine-based sorting signal signature appears at 8 to 11 (YQRL). Phosphoserine occurs at positions 14, 16, and 18. Residues 62 to 84 (MLIGEIFELMQFLFVVAFTTFLV) traverse the membrane as a helical segment. Residues 85 to 128 (SCVDYDILFANKMVNHSLHPTEPVKVTLPDAFLPAQVCSARIQE) lie on the Lumenal side of the membrane. The N-linked (GlcNAc...) asparagine glycan is linked to Asn-99. The chain crosses the membrane as a helical span at residues 129–154 (NGSLITILVIAGVFWVHRLIKFIYNI). The Cytoplasmic portion of the chain corresponds to 155–290 (CCYWEIHSFY…ELAQRLSNRI (136 aa)). The stretch at 291-301 (LWIGIANFLLC) is an intramembrane region. Topologically, residues 302–319 (PLILIWQILYAFFSYAEV) are cytoplasmic. Residues 320 to 328 (LKREPGALG) lie within the membrane without spanning it. The Cytoplasmic segment spans residues 329–371 (ARCWSLYGRCYLRHFNELEHELQSRLNRGYKPASKYMNCFLSP). A helical membrane pass occupies residues 372–397 (LLTLLAKNCAFFAGSILAVLIALTIY). Over 398 to 406 (DEDVLAVEH) the chain is Lumenal. A helical membrane pass occupies residues 407-424 (VLTTVTLLGVTVTVCRSF). At 425-470 (IPDQHMVFCPEQLLRVILAHIHYMPDHWQGNAHRSQTRDEFAQLFQ) the chain is on the cytoplasmic side. The stretch at 471 to 480 (YKAVFILEEL) is an intramembrane region. The Cytoplasmic segment spans residues 481–483 (LSP). The stretch at 484–492 (IVTPLILIF) is an intramembrane region. The Cytoplasmic portion of the chain corresponds to 493 to 839 (CLRPRALEII…DELPPQVHKV (347 aa)). 5 positions are modified to phosphoserine: Ser-656, Ser-735, Ser-738, Ser-741, and Ser-828. Disordered stretches follow at residues 656 to 688 (SPLQPGQAPTGRAPSTMTGSGVDARTASSGSSV) and 719 to 839 (QQAQ…VHKV). Basic and acidic residues predominate over residues 724 to 736 (EPERHVWHRRESD). 2 stretches are compositionally biased toward acidic residues: residues 737–747 (ESGESAPEEGG) and 823–832 (VPEEGSEDEL).

Belongs to the ATG9 family. In terms of assembly, homotrimer; forms a homotrimer with a central pore that forms a path between the two membrane leaflets. Interacts (via cytoplasmic its C-terminus) with ATG2A. Interacts with SUPT20H. Interacts (via the tyrosine-based sorting signal motif) with AP4M1; promoting association with the AP-4 complex. Interacts with ARFIP1 and ARFIP2. Interacts with PI4K2A and PI4KB. Interacts with ATG4A; the interaction is direct and promotes ATG9A trafficking. In terms of processing, ufmylated in a DDRGK1 dependent manner.

Its subcellular location is the preautophagosomal structure membrane. The protein localises to the cytoplasmic vesicle. It is found in the autophagosome membrane. The protein resides in the golgi apparatus. It localises to the trans-Golgi network membrane. Its subcellular location is the late endosome membrane. The protein localises to the recycling endosome membrane. It is found in the endoplasmic reticulum membrane. The protein resides in the mitochondrion membrane. It catalyses the reaction a 1,2-diacyl-sn-glycero-3-phosphocholine(in) = a 1,2-diacyl-sn-glycero-3-phosphocholine(out). The catalysed reaction is a 1,2-diacyl-sn-glycero-3-phospho-L-serine(in) = a 1,2-diacyl-sn-glycero-3-phospho-L-serine(out). It carries out the reaction a 1,2-diacyl-sn-glycero-3-phosphoethanolamine(in) = a 1,2-diacyl-sn-glycero-3-phosphoethanolamine(out). In terms of biological role, phospholipid scramblase involved in autophagy by mediating autophagosomal membrane expansion. Cycles between the preautophagosomal structure/phagophore assembly site (PAS) and the cytoplasmic vesicle pool and supplies membrane for the growing autophagosome. Lipid scramblase activity plays a key role in preautophagosomal structure/phagophore assembly by distributing the phospholipids that arrive through ATG2 (ATG2A or ATG2B) from the cytoplasmic to the luminal leaflet of the bilayer, thereby driving autophagosomal membrane expansion. Also required to supply phosphatidylinositol 4-phosphate to the autophagosome initiation site by recruiting the phosphatidylinositol 4-kinase beta (PI4KB) in a process dependent on ARFIP2, but not ARFIP1. In addition to autophagy, also plays a role in necrotic cell death. The polypeptide is Autophagy-related protein 9A (Bos taurus (Bovine)).